Consider the following 1626-residue polypeptide: RNA2 polyprotein (1626 aa).

2 disordered regions span residues 84-107 (KHSK…ARAA) and 1042-1066 (GRSN…RDAP). Positions 92–104 (PNGSVTTKRSNSA) are enriched in polar residues.

Belongs to the nepoviruses RNA2 polyprotein family. In terms of processing, specific enzymatic cleavages in vivo by the P1 encoded 3C-like protease yield mature proteins.

It localises to the host cell junction. The protein resides in the host plasmodesma. It is found in the virion. Functionally, implicated in RNA2 replication. Could also be required for nematode transmission of the virus. Its function is as follows. Transports viral genome to neighboring plant cells directly through plasmosdesmata, without any budding. The movement protein allows efficient cell to cell propagation, by bypassing the host cell wall barrier. Acts by forming a tubular structure at the host plasmodesmata, enlarging it enough to allow free passage of virion capsids. The protein is RNA2 polyprotein of Blackcurrant reversion association virus (BRAV).